Consider the following 660-residue polypeptide: Bifunctional polymyxin resistance protein ArnA (660 aa).

Residues 1–304 form a formyltransferase ArnAFT region; sequence MKAVIFAYHD…TLGLVAGARL (304 aa). The active-site Proton donor; for formyltransferase activity is the His104. (6R)-10-formyltetrahydrofolate-binding positions include Arg114 and 136 to 140; that span reads VKRAD. Positions 314 to 660 are dehydrogenase ArnADH; sequence RRIRVLILGV…RSVDVAERAS (347 aa). NAD(+)-binding positions include Asp347 and 368–369; that span reads DI. Residues Ala393, Tyr398, and 432-433 each bind UDP-alpha-D-glucuronate; that span reads TS. Catalysis depends on Glu434, which acts as the Proton acceptor; for decarboxylase activity. UDP-alpha-D-glucuronate-binding positions include Arg460, Asn492, 526-535, and Tyr613; that span reads KLIDGGQQKR. Arg619 serves as the catalytic Proton donor; for decarboxylase activity.

It in the N-terminal section; belongs to the Fmt family. UDP-L-Ara4N formyltransferase subfamily. The protein in the C-terminal section; belongs to the NAD(P)-dependent epimerase/dehydratase family. UDP-glucuronic acid decarboxylase subfamily. In terms of assembly, homohexamer, formed by a dimer of trimers.

The enzyme catalyses UDP-alpha-D-glucuronate + NAD(+) = UDP-beta-L-threo-pentopyranos-4-ulose + CO2 + NADH. The catalysed reaction is UDP-4-amino-4-deoxy-beta-L-arabinose + (6R)-10-formyltetrahydrofolate = UDP-4-deoxy-4-formamido-beta-L-arabinose + (6S)-5,6,7,8-tetrahydrofolate + H(+). It participates in nucleotide-sugar biosynthesis; UDP-4-deoxy-4-formamido-beta-L-arabinose biosynthesis; UDP-4-deoxy-4-formamido-beta-L-arabinose from UDP-alpha-D-glucuronate: step 1/3. It functions in the pathway nucleotide-sugar biosynthesis; UDP-4-deoxy-4-formamido-beta-L-arabinose biosynthesis; UDP-4-deoxy-4-formamido-beta-L-arabinose from UDP-alpha-D-glucuronate: step 3/3. Its pathway is bacterial outer membrane biogenesis; lipopolysaccharide biosynthesis. Bifunctional enzyme that catalyzes the oxidative decarboxylation of UDP-glucuronic acid (UDP-GlcUA) to UDP-4-keto-arabinose (UDP-Ara4O) and the addition of a formyl group to UDP-4-amino-4-deoxy-L-arabinose (UDP-L-Ara4N) to form UDP-L-4-formamido-arabinose (UDP-L-Ara4FN). The modified arabinose is attached to lipid A and is required for resistance to polymyxin and cationic antimicrobial peptides. In Salmonella heidelberg (strain SL476), this protein is Bifunctional polymyxin resistance protein ArnA.